We begin with the raw amino-acid sequence, 1406 residues long: Protein crumbs homolog 1 (1406 aa).

A signal peptide spans Met1–Ser25. At Phe26–Thr1347 the chain is on the extracellular side. Residues Asn30, Asn41, and Asn42 are each glycosylated (N-linked (GlcNAc...) asparagine). EGF-like domains are found at residues Asn30–Asp68, Met70–Glu108, and Thr110–Glu146. Intrachain disulfides connect Cys34/Cys45, Cys39/Cys54, Cys56/Cys67, Cys74/Cys85, Cys79/Cys96, Cys98/Cys107, Cys114/Cys125, Cys119/Cys134, Cys136/Cys145, Cys152/Cys163, Cys157/Cys172, Cys174/Cys183, Cys190/Cys201, Cys195/Cys210, Cys212/Cys221, Cys228/Cys239, Cys233/Cys248, Cys250/Cys259, Cys266/Cys277, and Cys271/Cys286. The 37-residue stretch at Asp148–Asp184 folds into the EGF-like 4; calcium-binding domain. An EGF-like 5; calcium-binding domain is found at Glu186 to Glu222. A glycan (N-linked (GlcNAc...) asparagine) is linked at Asn215. The EGF-like 6; calcium-binding domain occupies Glu224–Glu260. Positions Asn262–Glu299 constitute an EGF-like 7; calcium-binding domain. An N-linked (GlcNAc...) asparagine glycan is attached at Asn287. Disulfide bonds link Cys288/Cys298, Cys305/Cys316, Cys310/Cys325, Cys327/Cys336, Cys343/Cys354, Cys348/Cys383, Cys385/Cys394, Cys401/Cys412, Cys406/Cys421, Cys423/Cys438, Cys445/Cys456, Cys450/Cys469, and Cys471/Cys480. EGF-like domains lie at Leu301–Glu337 and Asp339–Glu395. Residues Asn313 and Asn322 are each glycosylated (N-linked (GlcNAc...) asparagine). The EGF-like 10; calcium-binding domain occupies Asp397–Ser439. N-linked (GlcNAc...) asparagine glycans are attached at residues Asn418, Asn427, and Asn453. Residues Ile441–Glu481 enclose the EGF-like 11 domain. Positions Thr485–Cys670 constitute a Laminin G-like 1 domain. 3 N-linked (GlcNAc...) asparagine glycosylation sites follow: Asn550, Asn561, and Asn657. 4 disulfides stabilise this stretch: Cys642–Cys670, Cys676–Cys687, Cys681–Cys696, and Cys698–Cys707. An EGF-like 12 domain is found at Arg672–Leu708. The 172-residue stretch at Gly714–Cys885 folds into the Laminin G-like 2 domain. N-linked (GlcNAc...) asparagine glycans are attached at residues Asn757, Asn871, and Asn880. 6 cysteine pairs are disulfide-bonded: Cys851–Cys885, Cys891–Cys902, Cys896–Cys911, Cys913–Cys922, Cys928–Cys939, and Cys933–Cys948. 2 EGF-like domains span residues Gly887–Glu923 and Glu924–Gln960. The 188-residue stretch at Ala950–Cys1137 folds into the Laminin G-like 3 domain. Residues Asn968, Asn975, and Asn1000 are each glycosylated (N-linked (GlcNAc...) asparagine). 16 cysteine pairs are disulfide-bonded: Cys1096–Cys1137, Cys1143–Cys1154, Cys1148–Cys1163, Cys1165–Cys1174, Cys1181–Cys1191, Cys1186–Cys1200, Cys1202–Cys1211, Cys1218–Cys1229, Cys1223–Cys1238, Cys1240–Cys1249, Cys1259–Cys1274, Cys1268–Cys1283, Cys1285–Cys1294, Cys1301–Cys1312, Cys1306–Cys1321, and Cys1323–Cys1332. The region spanning Gln1139–Glu1175 is the EGF-like 15 domain. The 36-residue stretch at Asn1177–Glu1212 folds into the EGF-like 16; calcium-binding domain. Asn1190 is a glycosylation site (N-linked (GlcNAc...) asparagine). EGF-like domains lie at Asp1214–Arg1250 and Pro1255–Glu1295. N-linked (GlcNAc...) asparagine glycosylation is found at Asn1243, Asn1265, and Asn1273. The region spanning Asp1297–Glu1333 is the EGF-like 19; calcium-binding domain. A helical membrane pass occupies residues Ile1348 to Val1368. Topologically, residues Thr1369 to Ile1406 are cytoplasmic. An interaction with EPB41L5 region spans residues Ser1370–Ile1406.

Belongs to the Crumbs protein family. Component of a complex composed of PALS1, CRB1 and EPB41L5. Within the complex, interacts (via intracellular domain) with PALS1 and EPB41L5 (via FERM domain). Forms a complex with MPP4 and PALS1. Interacts with MPDZ/MUPP1 and MPP4. Extensively glycosylated. In terms of tissue distribution, preferential expression in retina, also expressed in brain, testis, fetal brain and fetal eye. Expressed at the outer limiting membrane and apical to adherens junctions in the retina.

Its subcellular location is the apical cell membrane. The protein localises to the secreted. It localises to the cell projection. The protein resides in the cilium. It is found in the photoreceptor outer segment. Its subcellular location is the photoreceptor inner segment. Functionally, plays a role in photoreceptor morphogenesis in the retina. May maintain cell polarization and adhesion. The protein is Protein crumbs homolog 1 of Homo sapiens (Human).